Consider the following 549-residue polypeptide: NADH-quinone oxidoreductase subunit N (549 aa).

A run of 14 helical transmembrane segments spans residues 26–46, 57–77, 96–116, 148–168, 171–191, 206–226, 253–273, 297–317, 321–341, 347–367, 375–395, 421–441, 466–486, and 496–516; these read LSPLLVVFAAGVIGVIVEAFV, ALAMVAVGVAFVLTLVQVGAL, PSLFFQGVILALALASLLLIA, HTEVYPLVMFAVLGMQLFTAA, FLTMFIALEVMSLPLYLLCGL, YFLLGAFSSAFFLFGIAMVYG, LLIGIAMIGVGMLFKVGTVPF, LVAAFGAMLRVFYVAFGTTVA, PMLWVVAILTMVVAAVIAVTQ, LLAYSSVVHAGFILTAVVAAN, MFYLAAYGFTTVGAFAIVTLV, AASLGLFLLAFAGIPLTSGFI, SAVTAFFYVRIIVLMFFAEPA, and GILTGTTVGLGVAATLLLGIL.

It belongs to the complex I subunit 2 family. NDH-1 is composed of 14 different subunits. Subunits NuoA, H, J, K, L, M, N constitute the membrane sector of the complex.

The protein localises to the cell membrane. The enzyme catalyses a quinone + NADH + 5 H(+)(in) = a quinol + NAD(+) + 4 H(+)(out). NDH-1 shuttles electrons from NADH, via FMN and iron-sulfur (Fe-S) centers, to quinones in the respiratory chain. The immediate electron acceptor for the enzyme in this species is believed to be a menaquinone. Couples the redox reaction to proton translocation (for every two electrons transferred, four hydrogen ions are translocated across the cytoplasmic membrane), and thus conserves the redox energy in a proton gradient. This chain is NADH-quinone oxidoreductase subunit N, found in Thermobifida fusca (strain YX).